We begin with the raw amino-acid sequence, 123 residues long: UPF0102 protein Mflv_4140 (123 aa).

The protein belongs to the UPF0102 family.

In Mycolicibacterium gilvum (strain PYR-GCK) (Mycobacterium gilvum (strain PYR-GCK)), this protein is UPF0102 protein Mflv_4140.